Here is a 320-residue protein sequence, read N- to C-terminus: Small ribosomal subunit protein uS2 (320 aa).

Acidic residues predominate over residues 1–22 (MADETTTDTPDVQDEDAPDEDA). The interval 1–83 (MADETTTDTP…SSSEEETSHR (83 aa)) is disordered. Residues 27–41 (DDTASDSTGEAAAAD) show a composition bias toward low complexity. 2 stretches are compositionally biased toward acidic residues: residues 42–57 (TDAD…EDAP) and 65–78 (DDGD…SSEE).

It belongs to the universal ribosomal protein uS2 family.

This is Small ribosomal subunit protein uS2 from Salinibacter ruber (strain DSM 13855 / M31).